We begin with the raw amino-acid sequence, 113 residues long: Putative glycerol transporter Lin0367 (113 aa).

Transmembrane regions (helical) follow at residues 3–23 (IGIA…IRMM), 30–50 (EWGA…VWTI), 63–83 (GTVW…ASLL), and 92–112 (VVNL…LSLF).

It is found in the membrane. Functionally, could be involved in the glycerol uptake either via facilitated diffusion or active transport. The protein is Putative glycerol transporter Lin0367 of Listeria innocua serovar 6a (strain ATCC BAA-680 / CLIP 11262).